The following is a 221-amino-acid chain: UPF0502 protein CPS_0106 (221 aa).

Belongs to the UPF0502 family.

The polypeptide is UPF0502 protein CPS_0106 (Colwellia psychrerythraea (strain 34H / ATCC BAA-681) (Vibrio psychroerythus)).